A 385-amino-acid chain; its full sequence is DnaJ homolog subfamily C member 28 (385 aa).

Positions 48 to 132 constitute a J domain; the sequence is EYYRLLNLDE…EGKFKYNTPQ (85 aa). Residues 261-318 are a coiled coil; it reads KEIKDTIEQLREALLMSRKKLGNPLSPTEQKQWAQVCEQFQEKIRKLNKRINDFNLIV.

Its function is as follows. May have a role in protein folding or as a chaperone. The polypeptide is DnaJ homolog subfamily C member 28 (Dnajc28) (Mus musculus (Mouse)).